Here is a 215-residue protein sequence, read N- to C-terminus: MFVLKARHLMAAGLVSLAAWSAGAQAGAIEQLNAFVSNVTTARGEFVQRQVKGGANGSPLRVAGTSSGDFTFSRPGRFVWRYLKPYEQQLSADGQMLYIYDKDLSQVTERKLDASLGSSPAAILFGSNDLAKNFVLKEGGTKDGIDWVELTPKAKDTQFERVAIGFRAGELEGMELRDAFGNTTLLTFSHIQKNPQLPASAFRFVPPKGADVIKQ.

A signal peptide spans 1 to 24 (MFVLKARHLMAAGLVSLAAWSAGA).

It belongs to the LolA family. In terms of assembly, monomer.

The protein localises to the periplasm. In terms of biological role, participates in the translocation of lipoproteins from the inner membrane to the outer membrane. Only forms a complex with a lipoprotein if the residue after the N-terminal Cys is not an aspartate (The Asp acts as a targeting signal to indicate that the lipoprotein should stay in the inner membrane). This chain is Outer-membrane lipoprotein carrier protein, found in Ralstonia nicotianae (strain ATCC BAA-1114 / GMI1000) (Ralstonia solanacearum).